The following is a 510-amino-acid chain: ATP synthase subunit alpha (510 aa).

169–176 is an ATP binding site; the sequence is GDRQTGKT.

It belongs to the ATPase alpha/beta chains family. In terms of assembly, F-type ATPases have 2 components, CF(1) - the catalytic core - and CF(0) - the membrane proton channel. CF(1) has five subunits: alpha(3), beta(3), gamma(1), delta(1), epsilon(1). CF(0) has three main subunits: a(1), b(2) and c(9-12). The alpha and beta chains form an alternating ring which encloses part of the gamma chain. CF(1) is attached to CF(0) by a central stalk formed by the gamma and epsilon chains, while a peripheral stalk is formed by the delta and b chains.

It is found in the cell inner membrane. The enzyme catalyses ATP + H2O + 4 H(+)(in) = ADP + phosphate + 5 H(+)(out). Its function is as follows. Produces ATP from ADP in the presence of a proton gradient across the membrane. The alpha chain is a regulatory subunit. This Rickettsia rickettsii (strain Iowa) protein is ATP synthase subunit alpha.